Here is a 372-residue protein sequence, read N- to C-terminus: DNA double-strand break repair protein Mre11 (372 aa).

Mn(2+)-binding residues include Asp8, His10, Asp49, and Asn84. The active-site Proton donor is His85. His161, His190, and His192 together coordinate Mn(2+).

Belongs to the MRE11/RAD32 family. Homodimer. Forms a heterotetramer composed of two Mre11 subunits and two Rad50 subunits. Mn(2+) serves as cofactor.

Nuclease activity is regulated by Rad50. Its function is as follows. Part of the Rad50/Mre11 complex, which is involved in the early steps of DNA double-strand break (DSB) repair. The complex may facilitate opening of the processed DNA ends to aid in the recruitment of HerA and NurA. Mre11 binds to DSB ends and has both double-stranded 3'-5' exonuclease activity and single-stranded endonuclease activity. This chain is DNA double-strand break repair protein Mre11, found in Methanococcus maripaludis (strain DSM 14266 / JCM 13030 / NBRC 101832 / S2 / LL).